We begin with the raw amino-acid sequence, 372 residues long: Anhydro-N-acetylmuramic acid kinase (372 aa).

ATP is bound at residue 13–20 (GTSMDGID).

Belongs to the anhydro-N-acetylmuramic acid kinase family.

It catalyses the reaction 1,6-anhydro-N-acetyl-beta-muramate + ATP + H2O = N-acetyl-D-muramate 6-phosphate + ADP + H(+). The protein operates within amino-sugar metabolism; 1,6-anhydro-N-acetylmuramate degradation. It functions in the pathway cell wall biogenesis; peptidoglycan recycling. Catalyzes the specific phosphorylation of 1,6-anhydro-N-acetylmuramic acid (anhMurNAc) with the simultaneous cleavage of the 1,6-anhydro ring, generating MurNAc-6-P. Is required for the utilization of anhMurNAc either imported from the medium or derived from its own cell wall murein, and thus plays a role in cell wall recycling. This chain is Anhydro-N-acetylmuramic acid kinase, found in Rhizobium johnstonii (strain DSM 114642 / LMG 32736 / 3841) (Rhizobium leguminosarum bv. viciae).